The following is a 787-amino-acid chain: Patatin-like phospholipase domain-containing protein OOU_Y34scaffold00095g16.3 (787 aa).

Disordered regions lie at residues 47–69 and 137–164; these read APDT…ARSF and KVVG…PGRR. Positions 59–69 are enriched in low complexity; sequence ASPRSPSARSF. Residues 144–157 are compositionally biased toward basic residues; it reads HRQKKSSRRRKRSK. A helical transmembrane segment spans residues 180–200; sequence WPFLLIVGAWIVGLAVTYLFT. In terms of domain architecture, PNPLA spans 375–566; that stretch reads LCLSGGASFA…RTDIPIRALN (192 aa). The GXSXG motif lies at 406 to 410; it reads GTSGG. Residue Ser-408 is the Nucleophile of the active site. Asp-553 (proton acceptor) is an active-site residue. Residues 745 to 787 are disordered; sequence GTDEEITTNDEMEFASDEKAVLTEDEGQFDGVTDNTEGSPLLK. The segment covering 746–759 has biased composition (acidic residues); that stretch reads TDEEITTNDEMEFA. The segment covering 777–787 has biased composition (polar residues); it reads TDNTEGSPLLK.

This sequence belongs to the PLPL family.

It localises to the membrane. Functionally, probable lipid hydrolase. This chain is Patatin-like phospholipase domain-containing protein OOU_Y34scaffold00095g16.3, found in Pyricularia oryzae (strain Y34) (Rice blast fungus).